Consider the following 630-residue polypeptide: 1-deoxy-D-xylulose-5-phosphate synthase (630 aa).

Residues histidine 74 and 115-117 contribute to the thiamine diphosphate site; that span reads GHA. A Mg(2+)-binding site is contributed by aspartate 146. Thiamine diphosphate is bound by residues 147–148, asparagine 175, phenylalanine 284, and glutamate 364; that span reads AA. Asparagine 175 contacts Mg(2+).

This sequence belongs to the transketolase family. DXPS subfamily. In terms of assembly, homodimer. Mg(2+) serves as cofactor. Thiamine diphosphate is required as a cofactor.

It catalyses the reaction D-glyceraldehyde 3-phosphate + pyruvate + H(+) = 1-deoxy-D-xylulose 5-phosphate + CO2. It functions in the pathway metabolic intermediate biosynthesis; 1-deoxy-D-xylulose 5-phosphate biosynthesis; 1-deoxy-D-xylulose 5-phosphate from D-glyceraldehyde 3-phosphate and pyruvate: step 1/1. In terms of biological role, catalyzes the acyloin condensation reaction between C atoms 2 and 3 of pyruvate and glyceraldehyde 3-phosphate to yield 1-deoxy-D-xylulose-5-phosphate (DXP). The polypeptide is 1-deoxy-D-xylulose-5-phosphate synthase (Methylacidiphilum infernorum (isolate V4) (Methylokorus infernorum (strain V4))).